A 258-amino-acid chain; its full sequence is Aspartate/glutamate leucyltransferase (258 aa).

The protein belongs to the R-transferase family. Bpt subfamily.

It localises to the cytoplasm. It carries out the reaction N-terminal L-glutamyl-[protein] + L-leucyl-tRNA(Leu) = N-terminal L-leucyl-L-glutamyl-[protein] + tRNA(Leu) + H(+). The enzyme catalyses N-terminal L-aspartyl-[protein] + L-leucyl-tRNA(Leu) = N-terminal L-leucyl-L-aspartyl-[protein] + tRNA(Leu) + H(+). In terms of biological role, functions in the N-end rule pathway of protein degradation where it conjugates Leu from its aminoacyl-tRNA to the N-termini of proteins containing an N-terminal aspartate or glutamate. The protein is Aspartate/glutamate leucyltransferase of Rhodopseudomonas palustris (strain BisB18).